The following is a 235-amino-acid chain: Eukaryotic translation initiation factor 4E-1 (235 aa).

Positions 1 to 16 (MAVEDTPKSVVTEEAK) are enriched in basic and acidic residues. The segment at 1-59 (MAVEDTPKSVVTEEAKPNSIENPIDRYHEEGDDAEEGEIAGGEGDGNVDESSKSGVPES) is disordered. EIF4G-binding regions lie at residues 60 to 63 (HPLE) and 70 to 106 (FDNPAVKSKQTSWGSSLRPVFTFSTVEEFWSLYNNMK). Residues 78–83 (KQTSWG), Lys110, and 128–129 (WE) contribute to the mRNA site. Cys133 and Cys171 form a disulfide bridge. Positions 154 to 163 (YTLLALIGEQ) are EIF4G-binding. MRNA is bound by residues 178–183 (RGKQER) and 223–227 (KKLDR).

Belongs to the eukaryotic initiation factor 4E family. EIF4F is a multi-subunit complex, the composition of which varies with external and internal environmental conditions. It is composed of at least EIF4A, EIF4E and EIF4G. EIF4E is also known to interact with other partners. In higher plants two isoforms of EIF4F have been identified, named isoform EIF4F and isoform EIF(iso)4F. Isoform EIF4F has subunits p220 and p26, whereas isoform EIF(iso)4F has subunits p82 and p28. Interacts directly with EXA1. As to quaternary structure, (Microbial infection) Interacts with viral genome-linked protein (VPg); this interaction is possible in susceptible hosts but impaired in resistant plants. In terms of processing, according to the redox status, the Cys-133-Cys-171 disulfide bridge may have a role in regulating protein function by affecting its ability to bind capped mRNA. Expressed in all tissues except in the cells of the specialization zone of the roots.

The protein resides in the nucleus. It is found in the cytoplasm. Its function is as follows. Component of the protein complex eIF4F, which is involved in the recognition of the mRNA cap, ATP-dependent unwinding of 5'-terminal secondary structure and recruitment of mRNA to the ribosome. Recognizes and binds the 7-methylguanosine-containing mRNA cap during an early step in the initiation of protein synthesis and facilitates ribosome binding by inducing the unwinding of the mRNAs secondary structures. Key component of recessive resistance to potyviruses. (Microbial infection) Susceptibility host factor required for viral infection by recruiting viral RNAs to the host ribosomal complex via an interaction with viral genome-linked protein (VPg). The sequence is that of Eukaryotic translation initiation factor 4E-1 from Arabidopsis thaliana (Mouse-ear cress).